The sequence spans 830 residues: Scavenger receptor class F member 1 (830 aa).

The N-terminal stretch at 1 to 19 is a signal peptide; the sequence is MGLGLLLPLLLLWTRGTQG. Topologically, residues 20-421 are extracellular; sequence SELDPKGQHV…CQPGSGSRDT (402 aa). 4 EGF-like domains span residues 53–87, 95–130, 155–191, and 215–249; these read TIPICEGPDACQKDEVCVKPGLCRCKPGFFGAHCS, WGPDCRESCPCHPHGQCEPATGACQCQADRWGARCE, WSSTCRRPCQCNTAAARCEQATGACVCKPGWWGRRCS, and WGPECQQQCECVRGRCSAASGECTCPPGFRGARCE. 12 cysteine pairs are disulfide-bonded: cysteine 57/cysteine 69, cysteine 63/cysteine 75, cysteine 77/cysteine 86, cysteine 99/cysteine 111, cysteine 105/cysteine 118, cysteine 120/cysteine 129, cysteine 159/cysteine 172, cysteine 165/cysteine 179, cysteine 181/cysteine 190, cysteine 219/cysteine 230, cysteine 225/cysteine 237, and cysteine 239/cysteine 248. Asparagine 289 carries N-linked (GlcNAc...) asparagine glycosylation. EGF-like domains follow at residues 302-339 and 351-382; these read FGESCEQQCPHCRHGEACEPDTGHCQRCDPGWLGPRCE and CGSTCPTCVQGSCDTVTGDCVCSAGYWGPSCN. Intrachain disulfides connect cysteine 306–cysteine 319, cysteine 313–cysteine 326, cysteine 329–cysteine 338, cysteine 355–cysteine 363, cysteine 358–cysteine 370, and cysteine 372–cysteine 381. Asparagine 382 and asparagine 393 each carry an N-linked (GlcNAc...) asparagine glycan. A helical membrane pass occupies residues 422-442; the sequence is ALIAGSLVPLLLLFLGLACCA. Topologically, residues 443-830 are cytoplasmic; the sequence is CCCWAPRSDL…VVPISRPPEP (388 aa). 3 disordered regions span residues 516-539, 581-688, and 715-830; these read GWATDDSFSSDPESGEADEVPAYC, SLAR…SGPV, and FQKG…PPEP. Residues serine 589 and serine 606 each carry the phosphoserine modification. A compositionally biased stretch (acidic residues) spans 634-643; sequence ESTGPEEAEA. The span at 644–653 shows a compositional bias: low complexity; the sequence is PESFPAAASP.

As to quaternary structure, heterophilic interaction with SREC2 via its extracellular domain. The heterophilic interaction is suppressed by the presence of ligand such as Ac-LDL. Interacts with AVIL. As to expression, endothelial cells.

The protein localises to the membrane. Functionally, mediates the binding and degradation of acetylated low density lipoprotein (Ac-LDL). Mediates heterophilic interactions, suggesting a function as adhesion protein. Plays a role in the regulation of neurite-like outgrowth. In Homo sapiens (Human), this protein is Scavenger receptor class F member 1 (SCARF1).